The sequence spans 830 residues: BLOC-2 complex member HPS5 homolog (830 aa).

WD repeat units follow at residues 25–64, 67–106, and 114–153; these read RNNS…FLAI, SQLG…STDG, and GGPA…GRNI. Residues 578–604 adopt a coiled-coil conformation; the sequence is DTETIVRLLRKLETLMEENEEPNARLK.

It belongs to the HPS5 family.

Functionally, has a role in the biogenesis of eye pigment granules. Eye pigment granules are specialized forms of late endosomes or lysosomes. Biogenesis of pigment granules in the eye requires molecular components required for protein delivery to lysosomes. The chain is BLOC-2 complex member HPS5 homolog from Anopheles gambiae (African malaria mosquito).